A 619-amino-acid chain; its full sequence is Dihydroxy-acid dehydratase (619 aa).

Asp-81 is a Mg(2+) binding site. Cys-122 contributes to the [2Fe-2S] cluster binding site. Mg(2+)-binding residues include Asp-123 and Lys-124. Lys-124 is subject to N6-carboxylysine. [2Fe-2S] cluster is bound at residue Cys-195. Glu-494 provides a ligand contact to Mg(2+). The Proton acceptor role is filled by Ser-520.

The protein belongs to the IlvD/Edd family. As to quaternary structure, homodimer. It depends on [2Fe-2S] cluster as a cofactor. Mg(2+) serves as cofactor.

The enzyme catalyses (2R)-2,3-dihydroxy-3-methylbutanoate = 3-methyl-2-oxobutanoate + H2O. The catalysed reaction is (2R,3R)-2,3-dihydroxy-3-methylpentanoate = (S)-3-methyl-2-oxopentanoate + H2O. It functions in the pathway amino-acid biosynthesis; L-isoleucine biosynthesis; L-isoleucine from 2-oxobutanoate: step 3/4. The protein operates within amino-acid biosynthesis; L-valine biosynthesis; L-valine from pyruvate: step 3/4. Functionally, functions in the biosynthesis of branched-chain amino acids. Catalyzes the dehydration of (2R,3R)-2,3-dihydroxy-3-methylpentanoate (2,3-dihydroxy-3-methylvalerate) into 2-oxo-3-methylpentanoate (2-oxo-3-methylvalerate) and of (2R)-2,3-dihydroxy-3-methylbutanoate (2,3-dihydroxyisovalerate) into 2-oxo-3-methylbutanoate (2-oxoisovalerate), the penultimate precursor to L-isoleucine and L-valine, respectively. The chain is Dihydroxy-acid dehydratase from Shewanella denitrificans (strain OS217 / ATCC BAA-1090 / DSM 15013).